The sequence spans 41 residues: Large ribosomal subunit protein bL36 (41 aa).

This sequence belongs to the bacterial ribosomal protein bL36 family.

This is Large ribosomal subunit protein bL36 from Methylorubrum extorquens (strain CM4 / NCIMB 13688) (Methylobacterium extorquens).